The following is a 143-amino-acid chain: Large ribosomal subunit protein uL16 (143 aa).

This sequence belongs to the universal ribosomal protein uL16 family. Part of the 50S ribosomal subunit.

In terms of biological role, binds 23S rRNA and is also seen to make contacts with the A and possibly P site tRNAs. The protein is Large ribosomal subunit protein uL16 of Sphingopyxis alaskensis (strain DSM 13593 / LMG 18877 / RB2256) (Sphingomonas alaskensis).